Consider the following 588-residue polypeptide: Progranulin (588 aa).

Residues 1–17 (MWILVSWLALVARLVAG) form the signal peptide. N-linked (GlcNAc...) asparagine glycosylation occurs at Asn-38. Intrachain disulfides connect Cys-125-Cys-138, Cys-132-Cys-148, Cys-281-Cys-293, Cys-287-Cys-303, Cys-294-Cys-311, Cys-304-Cys-318, Cys-312-Cys-325, Cys-319-Cys-332, Cys-363-Cys-375, Cys-369-Cys-385, Cys-394-Cys-407, and Cys-401-Cys-413. A glycan (N-linked (GlcNAc...) asparagine) is linked at Asn-372. A glycan (N-linked (GlcNAc...) asparagine) is linked at Asn-525.

It belongs to the granulin family. As to quaternary structure, progranulin is secreted as a homodimer. Interacts with SLPI; interaction protects progranulin from proteolysis. Interacts (via region corresponding to granulin-7 peptide) with CTSD; stabilizes CTSD and increases its proteolytic activity. Interacts (via region corresponding to granulin-7 peptide) with SORT1; this interaction mediates endocytosis and lysosome delivery of progranulin; interaction occurs at the neuronal cell surface in a stressed nervous system. Interacts with PSAP; facilitates lysosomal delivery of progranulin from the extracellular space and the biosynthetic pathway. Forms a complex with PSAP and M6PR; PSAP bridges the binding between progranulin and M6PR. Forms a complex with PSAP and SORT1; progranulin bridges the interaction between PSAP and SORT1; facilitates lysosomal targeting of PSAP via SORT1; interaction enhances PSAP uptake in primary cortical neurons. Interacts (via regions corresponding to granulin-2 and granulin-7 peptides) with GBA1; this interaction prevents aggregation of GBA1-SCARB2 complex via interaction with HSPA1A upon stress. Interacts (via region corresponding to granulin-7 peptide) with HSPA1A; mediates recruitment of HSPA1A to GBA1 and prevents GBA1 aggregation in response to stress. In terms of processing, cleaved by ELANE; proteolysis is blocked by SLPI and is concentration- and time-dependent and induces CXCL8/IL-8 production; granulin-3 and granulin-4 are resistant to ELANE. Cleaved by CTSL in lysosome thus regulating the maturation and turnover of progranulin within the lysosome. In terms of tissue distribution, ubiquitous; most abundant in the spleen and several tissues of endocrine significance.

Its subcellular location is the secreted. The protein localises to the lysosome. Its function is as follows. Secreted protein that acts as a key regulator of lysosomal function and as a growth factor involved in inflammation, wound healing and cell proliferation. Regulates protein trafficking to lysosomes, and also the activity of lysosomal enzymes. Also facilitates the acidification of lysosomes, causing degradation of mature CTSD by CTSB. In addition, functions as a wound-related growth factor that acts directly on dermal fibroblasts and endothelial cells to promote division, migration and the formation of capillary-like tubule structures. Also promotes epithelial cell proliferation by blocking TNF-mediated neutrophil activation preventing release of oxidants and proteases. Moreover, modulates inflammation in neurons by preserving neurons survival, axonal outgrowth and neuronal integrity. Functionally, inhibits epithelial cell proliferation and induces epithelial cells to secrete IL-8. Stabilizes CTSD through interaction with CTSD leading to maintain its aspartic-type peptidase activity. This chain is Progranulin (Grn), found in Rattus norvegicus (Rat).